The sequence spans 325 residues: Elongation factor P--(R)-beta-lysine ligase (325 aa).

Position 76–78 (76–78) interacts with substrate; that stretch reads SPE. Residues 100–102 and Asn-109 each bind ATP; that span reads RNE. Position 118 (Tyr-118) interacts with substrate. ATP is bound at residue 244–245; it reads EL. Position 251 (Glu-251) interacts with substrate. Gly-300 serves as a coordination point for ATP.

Belongs to the class-II aminoacyl-tRNA synthetase family. EpmA subfamily. In terms of assembly, homodimer.

It catalyses the reaction D-beta-lysine + L-lysyl-[protein] + ATP = N(6)-((3R)-3,6-diaminohexanoyl)-L-lysyl-[protein] + AMP + diphosphate + H(+). With EpmB is involved in the beta-lysylation step of the post-translational modification of translation elongation factor P (EF-P). Catalyzes the ATP-dependent activation of (R)-beta-lysine produced by EpmB, forming a lysyl-adenylate, from which the beta-lysyl moiety is then transferred to the epsilon-amino group of a conserved specific lysine residue in EF-P. The chain is Elongation factor P--(R)-beta-lysine ligase from Proteus mirabilis (strain HI4320).